The sequence spans 568 residues: Oxygen-dependent choline dehydrogenase (568 aa).

8 to 37 (DYVIIGGGSAGSVLGNRLTEDKDKEVLVLE) is an FAD binding site. His-473 serves as the catalytic Proton acceptor.

It belongs to the GMC oxidoreductase family. FAD serves as cofactor.

It carries out the reaction choline + A = betaine aldehyde + AH2. The enzyme catalyses betaine aldehyde + NAD(+) + H2O = glycine betaine + NADH + 2 H(+). The protein operates within amine and polyamine biosynthesis; betaine biosynthesis via choline pathway; betaine aldehyde from choline (cytochrome c reductase route): step 1/1. In terms of biological role, involved in the biosynthesis of the osmoprotectant glycine betaine. Catalyzes the oxidation of choline to betaine aldehyde and betaine aldehyde to glycine betaine at the same rate. In Staphylococcus haemolyticus (strain JCSC1435), this protein is Oxygen-dependent choline dehydrogenase.